The sequence spans 617 residues: Vacuolar protein sorting-associated protein 33A (617 aa).

The tract at residues 268 to 287 (NFPSDGALPGGGGSGPRVEE) is disordered.

This sequence belongs to the STXBP/unc-18/SEC1 family. Component of the class C core vacuole/endosome tethering (CORVET) complex composed of at least Vps8, dor/Vps18, car/Vps33A and Vps16A; unlike in other species, Vps11 is not part of the Drosophila complex. Due to the reduced number of components the Drosophila CORVET complex is often referred to as the miniCORVET complex. Interacts with ema. Component of the homotypic fusion and vacuole protein sorting (HOPS) complex, composed of Vps16A, car/Vps33A, dor/Vps18, Vps39, Vps11 and lt/Vps41. The tethering complex core made up of Vps16A, car/Vps33A and dor/Vps18 and shared by both HOPS and CORVET, preferentially associates with CORVET specific Vps8 over HOPS specific lt/Vps41. Interacts with Syx17 (via SNARE domain); the interaction requires Vps16A, may involve additional components of the HOPS complex and may promote assembly of the Syx17-Snap29-Vamp7 trans-SNARE complex.

It localises to the early endosome. The protein resides in the late endosome membrane. Its subcellular location is the lysosome membrane. Functionally, core component of the class C core vacuole/endosome tethering (CORVET) and the homotypic fusion and vacuole protein sorting (HOPS) tethering complexes involved in endo-lysosomal vesicle trafficking and lysosome biogenesis. The CORVET complex facilitates docking and fusion of endosomal vesicles during endosome maturation, acts upstream of HOPS, but is not involved in autophagic flux. The CORVET complex may cooperate with the early endosomal tether Rbsn-5 to mediate endosomal fusion. The HOPS complex facilitates docking and fusion of lysosomes with late endosomes and several other types of vesicles. The HOPS complex is also involved in autophagy and crinophagy (the elimination of unused secretory granules through their fusion with lysosomes). The HOPS complex probably instigates autophagosome-lysosome fusion by binding autophagosome associated Syx17/syntaxin 17 and promoting assembly of the trans-SNARE complex. Independent of Syx17/syntaxin 17 HOPS is involved in biosynthetic transport to lysosomes and lysosome-related organelles such as eye-pigment granules. Required for endocytic degradation of boss/bride of sevenless and N/Notch in developing ommatidia. This Drosophila melanogaster (Fruit fly) protein is Vacuolar protein sorting-associated protein 33A.